A 311-amino-acid chain; its full sequence is Methionyl-tRNA formyltransferase (311 aa).

Position 110–113 (110–113 (SLLP)) interacts with (6S)-5,6,7,8-tetrahydrofolate.

Belongs to the Fmt family.

It catalyses the reaction L-methionyl-tRNA(fMet) + (6R)-10-formyltetrahydrofolate = N-formyl-L-methionyl-tRNA(fMet) + (6S)-5,6,7,8-tetrahydrofolate + H(+). In terms of biological role, attaches a formyl group to the free amino group of methionyl-tRNA(fMet). The formyl group appears to play a dual role in the initiator identity of N-formylmethionyl-tRNA by promoting its recognition by IF2 and preventing the misappropriation of this tRNA by the elongation apparatus. This Streptococcus pyogenes serotype M3 (strain ATCC BAA-595 / MGAS315) protein is Methionyl-tRNA formyltransferase.